A 179-amino-acid chain; its full sequence is Large ribosomal subunit protein uL6 (179 aa).

This sequence belongs to the universal ribosomal protein uL6 family. Part of the 50S ribosomal subunit.

Its function is as follows. This protein binds to the 23S rRNA, and is important in its secondary structure. It is located near the subunit interface in the base of the L7/L12 stalk, and near the tRNA binding site of the peptidyltransferase center. In Clostridium novyi (strain NT), this protein is Large ribosomal subunit protein uL6.